A 357-amino-acid chain; its full sequence is Phosphate acyltransferase (357 aa).

It belongs to the PlsX family. As to quaternary structure, homodimer. Probably interacts with PlsY.

Its subcellular location is the cytoplasm. The catalysed reaction is a fatty acyl-[ACP] + phosphate = an acyl phosphate + holo-[ACP]. Its pathway is lipid metabolism; phospholipid metabolism. Catalyzes the reversible formation of acyl-phosphate (acyl-PO(4)) from acyl-[acyl-carrier-protein] (acyl-ACP). This enzyme utilizes acyl-ACP as fatty acyl donor, but not acyl-CoA. The polypeptide is Phosphate acyltransferase (Roseobacter denitrificans (strain ATCC 33942 / OCh 114) (Erythrobacter sp. (strain OCh 114))).